We begin with the raw amino-acid sequence, 195 residues long: 3-isopropylmalate dehydratase small subunit (195 aa).

The protein belongs to the LeuD family. LeuD type 1 subfamily. Heterodimer of LeuC and LeuD.

The catalysed reaction is (2R,3S)-3-isopropylmalate = (2S)-2-isopropylmalate. It participates in amino-acid biosynthesis; L-leucine biosynthesis; L-leucine from 3-methyl-2-oxobutanoate: step 2/4. Its function is as follows. Catalyzes the isomerization between 2-isopropylmalate and 3-isopropylmalate, via the formation of 2-isopropylmaleate. The polypeptide is 3-isopropylmalate dehydratase small subunit (Salinispora tropica (strain ATCC BAA-916 / DSM 44818 / JCM 13857 / NBRC 105044 / CNB-440)).